Consider the following 336-residue polypeptide: Nicotinate-nucleotide--dimethylbenzimidazole phosphoribosyltransferase (336 aa).

Glutamate 304 (proton acceptor) is an active-site residue.

Belongs to the CobT family.

It catalyses the reaction 5,6-dimethylbenzimidazole + nicotinate beta-D-ribonucleotide = alpha-ribazole 5'-phosphate + nicotinate + H(+). Its pathway is nucleoside biosynthesis; alpha-ribazole biosynthesis; alpha-ribazole from 5,6-dimethylbenzimidazole: step 1/2. Its function is as follows. Catalyzes the synthesis of alpha-ribazole-5'-phosphate from nicotinate mononucleotide (NAMN) and 5,6-dimethylbenzimidazole (DMB). In Mesorhizobium japonicum (strain LMG 29417 / CECT 9101 / MAFF 303099) (Mesorhizobium loti (strain MAFF 303099)), this protein is Nicotinate-nucleotide--dimethylbenzimidazole phosphoribosyltransferase.